A 230-amino-acid polypeptide reads, in one-letter code: Uracil-DNA glycosylase (230 aa).

Aspartate 70 functions as the Proton acceptor in the catalytic mechanism.

It belongs to the uracil-DNA glycosylase (UDG) superfamily. UNG family.

The protein resides in the cytoplasm. The enzyme catalyses Hydrolyzes single-stranded DNA or mismatched double-stranded DNA and polynucleotides, releasing free uracil.. Its function is as follows. Excises uracil residues from the DNA which can arise as a result of misincorporation of dUMP residues by DNA polymerase or due to deamination of cytosine. The sequence is that of Uracil-DNA glycosylase from Campylobacter concisus (strain 13826).